Reading from the N-terminus, the 410-residue chain is Histone-lysine N-methyltransferase SUV39H2 (410 aa).

The 59-residue stretch at 47–105 (YEVEYLCDYKVVKDMEYYLVKWKGWPDSTNTWEPLQNLKCPLLLQQFFNDKHNYLSQVK) folds into the Chromo domain. The 59-residue stretch at 189–247 (FGCSCTDCFFEKCCPAEAGVLLAYNKNQQIKIPPGTPIYECNSRCQCGPDCPNRIVQKG) folds into the Pre-SET domain. Zn(2+)-binding residues include Cys-191, Cys-193, Cys-196, Cys-201, Cys-202, Cys-229, Cys-233, Cys-235, and Cys-239. An SET domain is found at 250-373 (YSLCIFRTSN…AGEELTFDYQ (124 aa)). S-adenosyl-L-methionine contacts are provided by residues 261 to 263 (CGW), Tyr-304, and 330 to 331 (NH). Cys-333 is a binding site for Zn(2+). A phosphoserine mark is found at Ser-381, Ser-384, and Ser-388. Positions 394–410 (ARTVCKCGAVTCRGYLN) constitute a Post-SET domain. Cys-398, Cys-400, and Cys-405 together coordinate Zn(2+).

This sequence belongs to the class V-like SAM-binding methyltransferase superfamily. Histone-lysine methyltransferase family. Suvar3-9 subfamily. Interacts with SMAD5. The large PER complex involved in the histone methylation is composed of at least PER2, CBX3, TRIM28, SUV39H1 and/or SUV39H2; CBX3 mediates the formation of the complex. Post-translationally, ubiquitinated by the DCX(DCAF13) E3 ubiquitin ligase complex, leading to its degradation.

It localises to the nucleus. The protein localises to the chromosome. The protein resides in the centromere. The catalysed reaction is L-lysyl(9)-[histone H3] + 3 S-adenosyl-L-methionine = N(6),N(6),N(6)-trimethyl-L-lysyl(9)-[histone H3] + 3 S-adenosyl-L-homocysteine + 3 H(+). Its function is as follows. Histone methyltransferase that specifically trimethylates 'Lys-9' of histone H3 using monomethylated H3 'Lys-9' as substrate. H3 'Lys-9' trimethylation represents a specific tag for epigenetic transcriptional repression by recruiting HP1 (CBX1, CBX3 and/or CBX5) proteins to methylated histones. Mainly functions in heterochromatin regions, thereby playing a central role in the establishment of constitutive heterochromatin at pericentric and telomere regions. H3 'Lys-9' trimethylation is also required to direct DNA methylation at pericentric repeats. SUV39H1 is targeted to histone H3 via its interaction with RB1 and is involved in many processes, such as cell cycle regulation, transcriptional repression and regulation of telomere length. May participate in regulation of higher-order chromatin organization during spermatogenesis. Recruited by the large PER complex to the E-box elements of the circadian target genes such as PER2 itself or PER1, contributes to the conversion of local chromatin to a heterochromatin-like repressive state through H3 'Lys-9' trimethylation. This Bos taurus (Bovine) protein is Histone-lysine N-methyltransferase SUV39H2 (SUV39H2).